The following is a 350-amino-acid chain: Hydroxymethylglutaryl-CoA synthase (350 aa).

The active-site Proton donor/acceptor is the Glu83. The Acyl-thioester intermediate role is filled by Cys115. (3S)-3-hydroxy-3-methylglutaryl-CoA is bound by residues Cys115 and Thr156. Residue Arg204 coordinates CoA. Residues Thr206 and His239 each coordinate (3S)-3-hydroxy-3-methylglutaryl-CoA. The Proton donor/acceptor role is filled by His239. Residue Lys244 participates in CoA binding. (3S)-3-hydroxy-3-methylglutaryl-CoA contacts are provided by Asn271 and Ser301.

It belongs to the thiolase-like superfamily. Archaeal HMG-CoA synthase family. In terms of assembly, interacts with acetoacetyl-CoA thiolase that catalyzes the precedent step in the pathway and with a DUF35 protein. The acetoacetyl-CoA thiolase/HMG-CoA synthase complex channels the intermediate via a fused CoA-binding site, which allows for efficient coupling of the endergonic thiolase reaction with the exergonic HMGCS reaction.

The catalysed reaction is acetoacetyl-CoA + acetyl-CoA + H2O = (3S)-3-hydroxy-3-methylglutaryl-CoA + CoA + H(+). The protein operates within metabolic intermediate biosynthesis; (R)-mevalonate biosynthesis; (R)-mevalonate from acetyl-CoA: step 2/3. Its function is as follows. Catalyzes the condensation of acetyl-CoA with acetoacetyl-CoA to form 3-hydroxy-3-methylglutaryl-CoA (HMG-CoA). Functions in the mevalonate (MVA) pathway leading to isopentenyl diphosphate (IPP), a key precursor for the biosynthesis of isoprenoid compounds that are building blocks of archaeal membrane lipids. The polypeptide is Hydroxymethylglutaryl-CoA synthase (Thermococcus gammatolerans (strain DSM 15229 / JCM 11827 / EJ3)).